Consider the following 177-residue polypeptide: SsrA-binding protein (177 aa).

2 disordered regions span residues 1-23 (MYVP…KDGK) and 148-177 (YDKR…QRGE). Residues 148–165 (YDKRQTLREKQDRRESDR) show a composition bias toward basic and acidic residues.

This sequence belongs to the SmpB family.

It localises to the cytoplasm. In terms of biological role, required for rescue of stalled ribosomes mediated by trans-translation. Binds to transfer-messenger RNA (tmRNA), required for stable association of tmRNA with ribosomes. tmRNA and SmpB together mimic tRNA shape, replacing the anticodon stem-loop with SmpB. tmRNA is encoded by the ssrA gene; the 2 termini fold to resemble tRNA(Ala) and it encodes a 'tag peptide', a short internal open reading frame. During trans-translation Ala-aminoacylated tmRNA acts like a tRNA, entering the A-site of stalled ribosomes, displacing the stalled mRNA. The ribosome then switches to translate the ORF on the tmRNA; the nascent peptide is terminated with the 'tag peptide' encoded by the tmRNA and targeted for degradation. The ribosome is freed to recommence translation, which seems to be the essential function of trans-translation. The protein is SsrA-binding protein of Streptomyces avermitilis (strain ATCC 31267 / DSM 46492 / JCM 5070 / NBRC 14893 / NCIMB 12804 / NRRL 8165 / MA-4680).